Here is a 486-residue protein sequence, read N- to C-terminus: E3 ubiquitin-protein ligase TRIM58 (486 aa).

The segment at 16-61 (CPVCLDFLQEPVSVDCGHSFCLRCISEFCEKSDGAQGGVYACPQCR) adopts an RING-type zinc-finger fold. A B box-type zinc finger spans residues 91 to 132 (PGARRCARHGEDLSRFCEEDEAALCWVCDAGPEHRTHRTAPL). Positions 96, 99, 118, and 124 each coordinate Zn(2+). A coiled-coil region spans residues 193–242 (LAQEEQRQLRRLEAEERATLQRLRESKSRLVQQSKALKELADELQERCQR). The region spanning 273-463 (LKTACCIPGR…TPLILPPTTI (191 aa)) is the B30.2/SPRY domain.

This sequence belongs to the TRIM/RBCC family. Expressed in erythroblasts.

The enzyme catalyses S-ubiquitinyl-[E2 ubiquitin-conjugating enzyme]-L-cysteine + [acceptor protein]-L-lysine = [E2 ubiquitin-conjugating enzyme]-L-cysteine + N(6)-ubiquitinyl-[acceptor protein]-L-lysine.. The protein operates within protein modification; protein ubiquitination. E3 ubiquitin ligase induced during late erythropoiesis. Directly binds and ubiquitinates the intermediate chain of the microtubule motor dynein (DYNC1LI1/DYNC1LI2), stimulating the degradation of the dynein holoprotein complex. May participate in the erythroblast enucleation process through regulation of nuclear polarization. The polypeptide is E3 ubiquitin-protein ligase TRIM58 (TRIM58) (Homo sapiens (Human)).